The chain runs to 768 residues: C-type polyheme cytochrome OmcC (768 aa).

Residues 1–23 (MSRKVTKYSAVLAVSLFAAALAG) form the signal peptide. Residue Cys-24 is the site of N-palmitoyl cysteine attachment. The S-diacylglycerol cysteine moiety is linked to residue Cys-24. Residues Cys-48, Cys-51, His-52, Cys-80, Cys-83, His-84, Cys-112, Cys-115, His-116, Cys-148, Cys-151, His-152, Cys-193, Cys-196, His-197, Cys-238, Cys-241, His-242, Cys-320, Cys-323, His-324, Cys-405, Cys-408, His-409, Cys-454, Cys-457, His-458, Cys-504, Cys-507, His-508, Cys-579, Cys-582, His-583, Cys-611, Cys-614, and His-615 each coordinate heme c.

Binds 12 heme c groups per subunit.

The protein localises to the cell outer membrane. Functionally, not involved in Fe(3+) reduction. In Geobacter sulfurreducens (strain ATCC 51573 / DSM 12127 / PCA), this protein is C-type polyheme cytochrome OmcC (omcC).